A 168-amino-acid polypeptide reads, in one-letter code: Phospholipase A and acyltransferase 1 (168 aa).

The Cytoplasmic segment spans residues 1–138 (MAFNDCFSLN…GEGVSEQANR (138 aa)). Residues 20–135 (LIEVFRPGYQ…LRYGEGVSEQ (116 aa)) form the LRAT domain. H30 is an active-site residue. C119 acts as the Acyl-thioester intermediate in catalysis. A helical transmembrane segment spans residues 139 to 159 (AISTVEFVTAAVGVFSFLGLF). Over 160–168 (PKGQRAKYY) the chain is Lumenal.

Belongs to the H-rev107 family. Abundantly expressed in testis, skeletal muscle, brain, and heart. As to expression, highly expressed in the testis, skeletal muscle, brain, heart, and thyroid.

The protein resides in the membrane. Its subcellular location is the cytoplasm. The protein localises to the nucleus. It catalyses the reaction a 1,2-diacyl-sn-glycero-3-phosphocholine + H2O = a 1-acyl-sn-glycero-3-phosphocholine + a fatty acid + H(+). The enzyme catalyses a 1,2-diacyl-sn-glycero-3-phosphocholine + H2O = a 2-acyl-sn-glycero-3-phosphocholine + a fatty acid + H(+). It carries out the reaction 1,2-dihexadecanoyl-sn-glycero-3-phosphocholine + H2O = 2-hexadecanoyl-sn-glycero-3-phosphocholine + hexadecanoate + H(+). The catalysed reaction is 1,2-dihexadecanoyl-sn-glycero-3-phosphocholine + H2O = 1-hexadecanoyl-sn-glycero-3-phosphocholine + hexadecanoate + H(+). It catalyses the reaction 1-hexadecanoyl-2-(5Z,8Z,11Z,14Z-eicosatetraenoyl)-sn-glycero-3-phosphoethanolamine + H2O = 2-(5Z,8Z,11Z,14Z)-eicosatetraenoyl-sn-glycero-3-phosphoethanolamine + hexadecanoate + H(+). The enzyme catalyses 1-hexadecanoyl-2-(5Z,8Z,11Z,14Z-eicosatetraenoyl)-sn-glycero-3-phosphoethanolamine + H2O = 1-hexadecanoyl-sn-glycero-3-phosphoethanolamine + (5Z,8Z,11Z,14Z)-eicosatetraenoate + H(+). It carries out the reaction 1,2-di-(9Z-octadecenoyl)-sn-glycero-3-phosphoethanolamine + 1,2-dihexadecanoyl-sn-glycero-3-phosphocholine = hexadecanoyl-sn-glycero-3-phosphocholine + N-hexadecanoyl-1,2-di-(9Z-octadecenoyl)-sn-glycero-3-phosphoethanolamine + H(+). The catalysed reaction is 1,2-dihexadecanoyl-sn-glycero-3-phosphocholine + a 2-acyl-sn-glycero-3-phosphocholine = a 1-hexadecanoyl-2-acyl-sn-glycero-3-phosphocholine + 2-hexadecanoyl-sn-glycero-3-phosphocholine. Its function is as follows. Exhibits both phospholipase A1/2 and acyltransferase activities. Shows phospholipase A1 (PLA1) and A2 (PLA2) activity, catalyzing the calcium-independent release of fatty acids from the sn-1 or sn-2 position of glycerophospholipids. Shows O-acyltransferase activity, catalyzing the transfer of a fatty acyl group from glycerophospholipid to the hydroxyl group of lysophospholipid. Shows N-acyltransferase activity, catalyzing the calcium-independent transfer of a fatty acyl group at the sn-1 position of phosphatidylcholine (PC) and other glycerophospholipids to the primary amine of phosphatidylethanolamine (PE), forming N-acylphosphatidylethanolamine (NAPE) which serves as precursor for N-acylethanolamines (NAEs). The sequence is that of Phospholipase A and acyltransferase 1 from Homo sapiens (Human).